The sequence spans 500 residues: Ferulic acid decarboxylase 1 (500 aa).

Mn(2+)-binding residues include Asn168, His191, and Glu233. Prenylated FMN contacts are provided by residues 168 to 173 (NWSIAR), 190 to 191 (QH), and Glu233. Glu282 (proton donor) is an active-site residue. Lys391 lines the prenylated FMN pocket.

This sequence belongs to the UbiD family. UbiD-like/FDC subfamily. As to quaternary structure, homodimer. May form higher order oligomers. Mn(2+) serves as cofactor. Prenylated FMN is required as a cofactor.

The protein resides in the cytoplasm. The catalysed reaction is (E)-4-coumarate + H(+) = 4-vinylphenol + CO2. It carries out the reaction (E)-cinnamate + H(+) = styrene + CO2. The enzyme catalyses (E)-ferulate + H(+) = 2-methoxy-4-vinylphenol + CO2. Functionally, catalyzes the reversible decarboxylation of aromatic carboxylic acids like ferulic acid, p-coumaric acid or cinnamic acid, producing the corresponding vinyl derivatives 4-vinylphenol, 4-vinylguaiacol, and styrene, respectively, which play the role of aroma metabolites. The chain is Ferulic acid decarboxylase 1 from Aspergillus niger (strain ATCC MYA-4892 / CBS 513.88 / FGSC A1513).